The sequence spans 104 residues: Phosphocarrier protein HPr (104 aa).

An HPr domain is found at 17–104 (ELSAIFMIRN…EVFNSGFGEL (88 aa)). His31 functions as the Pros-phosphohistidine intermediate in the catalytic mechanism.

The protein belongs to the HPr family.

It localises to the cytoplasm. General (non sugar-specific) component of the phosphoenolpyruvate-dependent sugar phosphotransferase system (sugar PTS). This major carbohydrate active-transport system catalyzes the phosphorylation of incoming sugar substrates concomitantly with their translocation across the cell membrane. The phosphoryl group from phosphoenolpyruvate (PEP) is transferred to the phosphoryl carrier protein HPr by enzyme I. Phospho-HPr then transfers it to the PTS EIIA domain. The polypeptide is Phosphocarrier protein HPr (ptsH) (Chlamydia muridarum (strain MoPn / Nigg)).